The chain runs to 428 residues: UPF0597 protein Dde_0807 (428 aa).

It belongs to the UPF0597 family.

The sequence is that of UPF0597 protein Dde_0807 from Oleidesulfovibrio alaskensis (strain ATCC BAA-1058 / DSM 17464 / G20) (Desulfovibrio alaskensis).